Here is a 329-residue protein sequence, read N- to C-terminus: Adenylate isopentenyltransferase 7, mitochondrial (329 aa).

The transit peptide at methionine 1–methionine 40 directs the protein to the mitochondrion. Glycine 41–serine 48 serves as a coordination point for ATP.

The protein belongs to the IPP transferase family. Expressed in both the vascular stele and the phloem companion cells of the root, in endodermis of the root elongation zone, trichomes on young leaves, and some pollen tubes.

Its subcellular location is the mitochondrion. It carries out the reaction dimethylallyl diphosphate + ADP = N(6)-(dimethylallyl)adenosine 5'-diphosphate + diphosphate. It catalyses the reaction dimethylallyl diphosphate + ATP = N(6)-(dimethylallyl)adenosine 5'-triphosphate + diphosphate. Involved in cytokinin biosynthesis. Catalyzes the transfer of an isopentenyl group from dimethylallyl diphosphate (DMAPP) to ATP and ADP. This Arabidopsis thaliana (Mouse-ear cress) protein is Adenylate isopentenyltransferase 7, mitochondrial (IPT7).